Here is a 512-residue protein sequence, read N- to C-terminus: Anaerobic nitric oxide reductase transcription regulator NorR (512 aa).

The Sigma-54 factor interaction domain maps to 190-419; that stretch reads MIGESLAMQE…LEHVISRAAV (230 aa). Residues 218 to 225 and 281 to 290 each bind ATP; these read GETGVGKE and ADNGTLFLDE. Positions 487–506 form a DNA-binding region, H-T-H motif; it reads WAATARALQLDTGNLHRLAK.

It functions in the pathway nitrogen metabolism; nitric oxide reduction. Functionally, required for the expression of anaerobic nitric oxide (NO) reductase, acts as a transcriptional activator for at least the norVW operon. Activation also requires sigma-54. This is Anaerobic nitric oxide reductase transcription regulator NorR from Aliivibrio fischeri (strain ATCC 700601 / ES114) (Vibrio fischeri).